The following is a 331-amino-acid chain: Ferrochelatase (331 aa).

Fe cation-binding residues include His187 and Glu286.

This sequence belongs to the ferrochelatase family.

It is found in the cytoplasm. It carries out the reaction heme b + 2 H(+) = protoporphyrin IX + Fe(2+). The protein operates within porphyrin-containing compound metabolism; protoheme biosynthesis; protoheme from protoporphyrin-IX: step 1/1. Its function is as follows. Catalyzes the ferrous insertion into protoporphyrin IX. This is Ferrochelatase from Legionella pneumophila (strain Corby).